The sequence spans 331 residues: Threonine-phosphate decarboxylase (331 aa).

At lysine 192 the chain carries N6-(pyridoxal phosphate)lysine.

The protein belongs to the class-I pyridoxal-phosphate-dependent aminotransferase family. As to quaternary structure, homodimer. It depends on pyridoxal 5'-phosphate as a cofactor.

The protein localises to the cytoplasm. It catalyses the reaction O-phospho-L-threonine + H(+) = (R)-1-aminopropan-2-yl phosphate + CO2. It functions in the pathway cofactor biosynthesis; adenosylcobalamin biosynthesis. Decarboxylates L-threonine-O-3-phosphate to yield (R)-1-amino-2-propanol O-2-phosphate, the precursor for the linkage between the nucleotide loop and the corrin ring in cobalamin. This chain is Threonine-phosphate decarboxylase (cobC), found in Pseudomonas aeruginosa (strain ATCC 15692 / DSM 22644 / CIP 104116 / JCM 14847 / LMG 12228 / 1C / PRS 101 / PAO1).